Reading from the N-terminus, the 404-residue chain is Ammonium transporter (404 aa).

9 helical membrane-spanning segments follow: residues 7-27 (VFMFFCALLVWLMTPGLALFY), 44-64 (FSSIAIVSIVWVLFGYTLAFA), 96-116 (LFMMFQMTFAVLTTAIISGAF), 125-145 (FLLFSVLWASLVYTPVAHWVW), 158-178 (FAGGNVVHISSGVAGLVLAIV), 227-247 (INTNTAAAAGIAGWILVEWII), 254-274 (LGAVSGAIAGLVAITPAAGFV), 277-297 (FASIIIGIIGGAVCFWGVFSL), and 352-372 (IVAIAATYVFVFIVTFVIIKI).

It belongs to the ammonia transporter channel (TC 1.A.11.2) family. As to quaternary structure, interacts with NrgB for a correct localization of the latter. GlnK-AmtB complex interacts with TnrA.

Its subcellular location is the cell membrane. Functionally, functions as an ammonium and methylammonium transporter in the absence of glutamine. Required for ammonium utilization at low concentrations or at low pH values, when ammonium is the single nitrogen source. Required for binding of NrgB to the membrane. Interaction between GlnK-AmtB complex and TnrA protects TnrA from proteolytic degradation. This chain is Ammonium transporter, found in Bacillus subtilis (strain 168).